Consider the following 218-residue polypeptide: Ribose-5-phosphate isomerase A (218 aa).

Substrate is bound by residues 28-31, 81-84, and 94-97; these read TGST, DGAD, and KGGG. E103 acts as the Proton acceptor in catalysis. K121 lines the substrate pocket.

The protein belongs to the ribose 5-phosphate isomerase family. As to quaternary structure, homodimer.

The catalysed reaction is aldehydo-D-ribose 5-phosphate = D-ribulose 5-phosphate. It participates in carbohydrate degradation; pentose phosphate pathway; D-ribose 5-phosphate from D-ribulose 5-phosphate (non-oxidative stage): step 1/1. In terms of biological role, catalyzes the reversible conversion of ribose-5-phosphate to ribulose 5-phosphate. The chain is Ribose-5-phosphate isomerase A from Shewanella piezotolerans (strain WP3 / JCM 13877).